A 428-amino-acid polypeptide reads, in one-letter code: 3-phosphoshikimate 1-carboxyvinyltransferase (428 aa).

3-phosphoshikimate contacts are provided by Lys-21, Ser-22, and Arg-26. Lys-21 contacts phosphoenolpyruvate. Residues Gly-91 and Arg-119 each contribute to the phosphoenolpyruvate site. Positions 164, 166, 313, and 340 each coordinate 3-phosphoshikimate. Residue Gln-166 coordinates phosphoenolpyruvate. The Proton acceptor role is filled by Asp-313. Positions 344 and 386 each coordinate phosphoenolpyruvate.

It belongs to the EPSP synthase family. As to quaternary structure, monomer.

It is found in the cytoplasm. The catalysed reaction is 3-phosphoshikimate + phosphoenolpyruvate = 5-O-(1-carboxyvinyl)-3-phosphoshikimate + phosphate. Its pathway is metabolic intermediate biosynthesis; chorismate biosynthesis; chorismate from D-erythrose 4-phosphate and phosphoenolpyruvate: step 6/7. Functionally, catalyzes the transfer of the enolpyruvyl moiety of phosphoenolpyruvate (PEP) to the 5-hydroxyl of shikimate-3-phosphate (S3P) to produce enolpyruvyl shikimate-3-phosphate and inorganic phosphate. The polypeptide is 3-phosphoshikimate 1-carboxyvinyltransferase (Campylobacter jejuni subsp. jejuni serotype O:23/36 (strain 81-176)).